We begin with the raw amino-acid sequence, 698 residues long: Interleukin-17 receptor C (698 aa).

A signal peptide spans 1-21; sequence MPVSWFLLSLALGRNPVVVSL. Over 22-464 the chain is Extracellular; it reads ERLMEPQDTA…CPMDKYIHRR (443 aa). Residue Asn182 is glycosylated (N-linked (GlcNAc...) asparagine). The cysteines at positions 190 and 202 are disulfide-linked. Residues Asn209, Asn249, Asn255, and Asn259 are each glycosylated (N-linked (GlcNAc...) asparagine). 6 cysteine pairs are disulfide-bonded: Cys266/Cys316, Cys268/Cys284, Cys325/Cys334, Cys364/Cys378, Cys406/Cys413, and Cys440/Cys455. Residues 465–485 traverse the membrane as a helical segment; sequence WVLVWLACLLLAAALFFFLLL. The Cytoplasmic segment spans residues 486 to 698; the sequence is KKDRRKAARG…WDLGPCTTLE (213 aa). The SEFIR domain maps to 496-645; that stretch reads SRTALLLHSA…LPSQLPAFLD (150 aa).

Homodimer; disulfide-linked. Heterodimer with IL17RA. Heterodimerization with IL17RA is independent of the cytoplasmic tail. Associates with non-glycosylated IL17RA constitutively. Binding of IL17A and IL17F induces association with glycosylated IL17RA. Forms complexes with 2:1 binding stoichiometry: two receptor chains for one interleukin molecule. IL17A homodimer preferentially drives the formation of IL17RA-IL17RC heterodimeric receptor complex, whereas IL17F homodimer forms predominantly complexes with IL17RC homodimer. IL17A-IL17F forms complexes with IL17RA-IL17RC, but with lower affinity when compared to IL17A homodimer. IL17RC chain cannot distinguish between IL17A and IL17F molecules, potentially enabling the formation of topologically distinct complexes. Interacts (through SEFIR domain and extended downstream region) with TRAF3IP2/ACT1 (phosphorylated). In terms of tissue distribution, highly expressed in colonic epithelial cells. Expressed in lung epithelial cells. Expressed in macrophages. Highly expressed in B-1a B cells and at a lower extent in B-1b and B-2 B cells (at protein level).

The protein resides in the cell membrane. Functionally, receptor for IL17A and IL17F, major effector cytokines of innate and adaptive immune system involved in antimicrobial host defense and maintenance of tissue integrity. Receptor for IL17A and IL17F homodimers as part of a heterodimeric complex with IL17RA. Receptor for the heterodimer formed by IL17A and IL17B as part of a heterodimeric complex with IL17RA. Has also been shown to be the cognate receptor for IL17F and to bind IL17A with high affinity without the need for IL17RA. Upon binding of IL17F homodimer triggers downstream activation of TRAF6 and NF-kappa-B signaling pathway. Induces transcriptional activation of IL33, a potent cytokine that stimulates group 2 innate lymphoid cells and adaptive T-helper 2 cells involved in pulmonary allergic response to fungi. Promotes sympathetic innervation of peripheral organs by coordinating the communication between gamma-delta T cells and parenchymal cells. Stimulates sympathetic innervation of thermogenic adipose tissue by driving TGFB1 expression. Binding of IL17A-IL17F to IL17RA-IL17RC heterodimeric receptor complex triggers homotypic interaction of IL17RA and IL17RC chains with TRAF3IP2 adapter through SEFIR domains. This leads to downstream TRAF6-mediated activation of NF-kappa-B and MAPkinase pathways ultimately resulting in transcriptional activation of cytokines, chemokines, antimicrobial peptides and matrix metalloproteinases, with potential strong immune inflammation. Primarily induces neutrophil activation and recruitment at infection and inflammatory sites. Stimulates the production of antimicrobial beta-defensins DEFB1, DEFB103A, and DEFB104A by mucosal epithelial cells, limiting the entry of microbes through the epithelial barriers. The protein is Interleukin-17 receptor C (Il17rc) of Mus musculus (Mouse).